Consider the following 532-residue polypeptide: IQ domain-containing protein IQM4 (532 aa).

Disordered stretches follow at residues Ser47–Glu67 and Pro85–Leu104. The span at Asn56–Met66 shows a compositional bias: basic and acidic residues. Residues Pro85–Val94 show a composition bias toward acidic residues. The IQ domain occupies Leu136–Glu165. Disordered stretches follow at residues Ser410–Glu443 and Pro487–Arg513. Residues Pro487 to Phe496 show a composition bias toward polar residues. A compositionally biased stretch (pro residues) spans Pro499–Ser509.

As to expression, expressed in roots, cauline leaves and flowers, and at lower levels in rosette leaves, stems and siliques.

It localises to the cytoplasm. Its subcellular location is the nucleus. In terms of biological role, may be involved in biotic and abiotic stress responses. This chain is IQ domain-containing protein IQM4, found in Arabidopsis thaliana (Mouse-ear cress).